The primary structure comprises 220 residues: Vesicle-associated membrane protein 7 (220 aa).

At Ala-2 the chain carries N-acetylalanine. Topologically, residues 2-188 (AILFAVVARG…ARAMCMKNIK (187 aa)) are cytoplasmic. A Longin domain is found at 7 to 110 (VVARGTTILA…AMNSEFSSVL (104 aa)). Positions 125–185 (KVMETQAQVD…RNLARAMCMK (61 aa)) constitute a v-SNARE coiled-coil homology domain. Phosphoserine is present on residues Ser-167 and Ser-168. The helical; Anchor for type IV membrane protein transmembrane segment at 189–209 (LTIIIIIVSIVFIYIIVSLLC) threads the bilayer. Over 210–220 (GGFTWPNCVKK) the chain is Vesicular.

Belongs to the synaptobrevin family. Component of the SNARE complex composed of STX4, SNAP23 and VAMP7 that binds SYT7 during lysosomal exocytosis. Component of the SNARE complex composed of STX7, STX8, VAMP7 and VTI1B that is required for heterotypic fusion of late endosomes with lysosomes. May interact with STX17. Interacts with PICALM. Interacts with RAB21.

It is found in the cytoplasmic vesicle. Its subcellular location is the secretory vesicle membrane. It localises to the golgi apparatus. The protein resides in the trans-Golgi network membrane. The protein localises to the late endosome membrane. It is found in the lysosome membrane. Its subcellular location is the endoplasmic reticulum membrane. It localises to the phagosome membrane. The protein resides in the synapse. The protein localises to the synaptosome. Involved in the targeting and/or fusion of transport vesicles to their target membrane during transport of proteins from the early endosome to the lysosome. Required for heterotypic fusion of late endosomes with lysosomes and homotypic lysosomal fusion. Required for calcium regulated lysosomal exocytosis. Involved in the export of chylomicrons from the endoplasmic reticulum to the cis Golgi. Required for exocytosis of mediators during eosinophil and neutrophil degranulation, and target cell killing by natural killer cells. Required for focal exocytosis of late endocytic vesicles during phagosome formation. In Mus musculus (Mouse), this protein is Vesicle-associated membrane protein 7 (Vamp7).